A 338-amino-acid polypeptide reads, in one-letter code: Palmitoyltransferase ZDHHC15 (338 aa).

The Cytoplasmic portion of the chain corresponds to 1 to 20 (MLAGCRVALPRGLRCCQRVL). Residues 21–41 (SWVPVVIISLVVLWSYYAYVW) traverse the membrane as a helical segment. At 42–56 (ELCLVTVTNPAEKAA) the chain is on the lumenal side. The chain crosses the membrane as a helical span at residues 57-77 (YLLIFHTVFLLFIWTYWKAIF). The Cytoplasmic portion of the chain corresponds to 78–172 (TPPKQPTKKF…NNCIGYSNYK (95 aa)). Residues 129 to 179 (RFCDTCQMVKPDRCHHCSVCGMCVLKMDHHCPWVNNCIGYSNYKFFLLFLA) form the DHHC domain. Zn(2+) contacts are provided by C131, C134, H144, C145, C148, C151, and H158. The active-site S-palmitoyl cysteine intermediate is the C159. Residue C165 coordinates Zn(2+). A helical membrane pass occupies residues 173–193 (FFLLFLAYAMLYCLYIGCTVF). The Lumenal portion of the chain corresponds to 194 to 210 (QYFILYWTDTLSNGRAK). A helical transmembrane segment spans residues 211–234 (FHVLFLLFVALMFFISLMFLFGYH). Topologically, residues 235–338 (CWLVSLNRTT…TSHITVHIEK (104 aa)) are cytoplasmic.

It belongs to the DHHC palmitoyltransferase family. Autopalmitoylated (in vitro).

It localises to the golgi apparatus membrane. The protein resides in the postsynaptic density. The catalysed reaction is L-cysteinyl-[protein] + hexadecanoyl-CoA = S-hexadecanoyl-L-cysteinyl-[protein] + CoA. It carries out the reaction L-cysteinyl-[protein] + tetradecanoyl-CoA = S-tetradecanoyl-L-cysteinyl-[protein] + CoA. It catalyses the reaction L-cysteinyl-[protein] + octadecanoyl-CoA = S-octadecanoyl-L-cysteinyl-[protein] + CoA. Palmitoyltransferase that catalyzes the addition of palmitate onto various protein substrates. Has no stringent fatty acid selectivity and in addition to palmitate can also transfer onto target proteins myristate from tetradecanoyl-CoA and stearate from octadecanoyl-CoA. May thereby regulate target proteins association and localization to membranes. In the nervous system, probably catalyzes the palmitoylation of synaptic proteins and is involved in the differentiation of dopaminergic neurons and the development of the diencephalon. This Xenopus laevis (African clawed frog) protein is Palmitoyltransferase ZDHHC15 (zdhhc15).